Here is a 545-residue protein sequence, read N- to C-terminus: Glutamyl-tRNA(Gln) amidotransferase subunit B-1, chloroplastic/mitochondrial (545 aa).

Belongs to the GatB/GatE family. GatB subfamily. In terms of assembly, subunit of the heterotrimeric GatCAB amidotransferase (AdT) complex, composed of A, B and C subunits.

The protein resides in the mitochondrion. It is found in the plastid. Its subcellular location is the chloroplast. It carries out the reaction L-glutamyl-tRNA(Gln) + L-glutamine + ATP + H2O = L-glutaminyl-tRNA(Gln) + L-glutamate + ADP + phosphate + H(+). Its function is as follows. Allows the formation of correctly charged Gln-tRNA(Gln) through the transamidation of misacylated Glu-tRNA(Gln) in chloroplasts and mitochondria. The reaction takes place in the presence of glutamine and ATP through an activated gamma-phospho-Glu-tRNA(Gln). This Micromonas pusilla (strain CCMP1545) (Picoplanktonic green alga) protein is Glutamyl-tRNA(Gln) amidotransferase subunit B-1, chloroplastic/mitochondrial.